The primary structure comprises 240 residues: MSELSYRRILLKLSGEALMGDGDYGIDPKVINRLAHEVIEAQQAGAQVALVIGGGNIFRGAGLAASGMDRVTGDHMGMLATVINALAMQDALEKLGAKVRVMSAIKINDVCEDFIRRRAIRHLEKGRIAIFAAGTGNPFFTTDSGAALRAIEIGADLLLKATKVDGVYDKDPKKHSDAVRYDSLTYDEVIMQGLEVMDTAAFALARDSDLPLRIFGMSEPGVLLRILHGAQIGTLVQGRS.

12-15 (KLSG) is an ATP binding site. Residue Gly54 participates in UMP binding. Positions 55 and 59 each coordinate ATP. Residues Asp74 and 135-142 (TGNPFFTT) each bind UMP. ATP is bound by residues Thr162, Tyr168, and Asp171.

This sequence belongs to the UMP kinase family. As to quaternary structure, homohexamer.

It localises to the cytoplasm. It carries out the reaction UMP + ATP = UDP + ADP. Its pathway is pyrimidine metabolism; CTP biosynthesis via de novo pathway; UDP from UMP (UMPK route): step 1/1. With respect to regulation, inhibited by UTP. Catalyzes the reversible phosphorylation of UMP to UDP. This is Uridylate kinase from Xanthomonas campestris pv. campestris (strain ATCC 33913 / DSM 3586 / NCPPB 528 / LMG 568 / P 25).